A 341-amino-acid polypeptide reads, in one-letter code: Acetylpolyamine amidohydrolase (341 aa).

Substrate is bound by residues Tyr-19, Glu-106, and Glu-117. His-159 functions as the Proton donor/acceptor in the catalytic mechanism. Residues Asp-195, His-197, and Asp-284 each coordinate Zn(2+). Tyr-323 provides a ligand contact to substrate.

Belongs to the histone deacetylase family. In terms of assembly, homodimer. Requires Zn(2+) as cofactor.

It carries out the reaction N-acetylputrescine + H2O = putrescine + acetate. The enzyme catalyses N-acetylcadaverine + H2O = cadaverine + acetate. The catalysed reaction is N(1)-acetylspermine + H2O = spermine + acetate. It catalyses the reaction N(1)-acetylspermidine + H2O = spermidine + acetate. It carries out the reaction N(8)-acetylspermidine + H2O = spermidine + acetate. It functions in the pathway amine and polyamine metabolism. Its activity is regulated as follows. Zinc ions inhibit enzyme activity in a dose-dependent manner. Inhibited by KCl at concentrations above 10 mM. Inhibited by o-oxyquinoline in vitro, suggesting that it is a metalloprotein. Inhibited by various substrate N(8)-acetylspermidine analogs bearing different metal-binding groups such as trifluoromethylketone, thiol, or hydroxamate, and by hydroxamate analogs of short-chain acetyldiamines. Functionally, involved in polyamine metabolism. Catalyzes the deacetylation of various acetylated polyamines such as N-acetylputrescine, N-acetylcadaverine, N(1)-acetylspermine, N(1)-acetylspermidine and N(8)-acetylspermidine. In vitro, is also able to deacetylate L-Lys(epsilon-acetyl)coumarin, but has very low activity towards the larger tetrapeptide N-acetyl-L-Arg-L-His-L-Lys(epsilon-acetyl)-L-Lys(epsilon-acetyl)coumarin. The sequence is that of Acetylpolyamine amidohydrolase from Mycoplana ramosa (Mycoplana bullata).